The chain runs to 93 residues: Small ribosomal subunit protein uS19 (93 aa).

This sequence belongs to the universal ribosomal protein uS19 family.

Functionally, protein S19 forms a complex with S13 that binds strongly to the 16S ribosomal RNA. This is Small ribosomal subunit protein uS19 from Leptospira interrogans serogroup Icterohaemorrhagiae serovar copenhageni (strain Fiocruz L1-130).